The chain runs to 136 residues: MGARKKISAEKRKEALKTMYFAKLQNVPTSPRKMRLVADMIRGMEVNRALGVLKFSSKEAAARVEKLLRSAIANWEQKNERKAESGELFVTKIFVDGGATLKRMRPAPQGRGYRIRKRSNHVTLFVDSKSNNEDQN.

Belongs to the universal ribosomal protein uL22 family. As to quaternary structure, part of the 50S ribosomal subunit.

In terms of biological role, this protein binds specifically to 23S rRNA; its binding is stimulated by other ribosomal proteins, e.g. L4, L17, and L20. It is important during the early stages of 50S assembly. It makes multiple contacts with different domains of the 23S rRNA in the assembled 50S subunit and ribosome. Functionally, the globular domain of the protein is located near the polypeptide exit tunnel on the outside of the subunit, while an extended beta-hairpin is found that lines the wall of the exit tunnel in the center of the 70S ribosome. The protein is Large ribosomal subunit protein uL22 of Bacteroides fragilis (strain YCH46).